The following is a 176-amino-acid chain: Flavodoxin (176 aa).

Residues 4–165 (IGIFFGSDTG…RVEKWVKQVA (162 aa)) enclose the Flavodoxin-like domain.

It belongs to the flavodoxin family. FMN serves as cofactor.

Its function is as follows. Low-potential electron donor to a number of redox enzymes. This is Flavodoxin (fldA) from Klebsiella pneumoniae.